Here is a 469-residue protein sequence, read N- to C-terminus: MVSLLWKFTLLCLFLLACTSAEVLERSSKPQTPDKDPFYDPPSGWEEKEHGTILRSRKVDIAFFQIAKVKYKEAYEILYRTSRSEEDQPSTTVTTVIVPENAKKDKLVNMNVYVDSNGARCAPSYVLQRNAKLATDPALSYQQVLFSTILDEGYILTVPDYQGPKRAFAAGRLEGHMAIDGILATLNLKELCLSKDTKVIGYGYSGGSIATGWAASLQPSYAPNLNMVGWTFGGTPANLTSTLEHLNGGTPAGFAVSGVAGIVDEYESVADWINDKLTHKGKHALDFVREHCTVGIVLRYPFTNILSDSFMKHGAQLLQSPIMKKVLGTLNMGVRPDETPKAPVYMFHAKLDEVIPYGSAHDAAKRWGDHGADILFEEFTGLVMGHASTELLNLPNVLLFMRDRMSGKPFIHGYEHKHTDNPLEDPGVIAKGFDALAETIKNAIDNTVGMGDKHMKAKIEQSRRRRIVS.

An N-terminal signal peptide occupies residues 1–21; it reads MVSLLWKFTLLCLFLLACTSA. C121 and C292 are disulfide-bonded. S205 (nucleophile) is an active-site residue. N-linked (GlcNAc...) asparagine glycosylation is present at N238. Active-site residues include D352 and H386.

Belongs to the AB hydrolase superfamily. Lipase family. Class Lip subfamily.

It localises to the secreted. It catalyses the reaction a triacylglycerol + H2O = a diacylglycerol + a fatty acid + H(+). The enzyme catalyses a monoacylglycerol + H2O = glycerol + a fatty acid + H(+). It carries out the reaction a diacylglycerol + H2O = a monoacylglycerol + a fatty acid + H(+). Secreted lipase that hydrolyzes acylglycerol lipids such as triacylglycerols and consequently releases free fatty acid. Generates free oleic acid from the substrates mono- and diolein and hydrolyzes triolein in significant amounts. Due to an absence of fatty acid synthase genes in Malassezia species, secretory lipases are essential for the yeast to generate free fatty acids from degradation of sebum and assimilate them as lipid sources for growth. Plays an essential role at the pathogen-host interface during disease progression. Performs also the reverse reaction to build diacyl- and triacyl- glycerols from monoacylglycerols. The sequence is that of Secreted triacylglycerol lipase LIP3 from Malassezia restricta (strain ATCC 96810 / NBRC 103918 / CBS 7877) (Seborrheic dermatitis infection agent).